Consider the following 209-residue polypeptide: Nucleoside triphosphate pyrophosphatase (209 aa).

Residue Asp79 is the Proton acceptor of the active site.

Belongs to the Maf family. The cofactor is a divalent metal cation.

Its subcellular location is the cytoplasm. It catalyses the reaction a ribonucleoside 5'-triphosphate + H2O = a ribonucleoside 5'-phosphate + diphosphate + H(+). It carries out the reaction a 2'-deoxyribonucleoside 5'-triphosphate + H2O = a 2'-deoxyribonucleoside 5'-phosphate + diphosphate + H(+). In terms of biological role, nucleoside triphosphate pyrophosphatase. May have a dual role in cell division arrest and in preventing the incorporation of modified nucleotides into cellular nucleic acids. The chain is Nucleoside triphosphate pyrophosphatase from Mycolicibacterium vanbaalenii (strain DSM 7251 / JCM 13017 / BCRC 16820 / KCTC 9966 / NRRL B-24157 / PYR-1) (Mycobacterium vanbaalenii).